Here is a 336-residue protein sequence, read N- to C-terminus: MAKIYYQQDCNLSLLEGKTVAVIGYGSQGHAHALNMKESGVHVIIGLYEGSKSWAKASAAGFEVYTAAEAAKKADVIMILINDEKQAKMYKESIEPNLEAGNALMFAHGFAIHFGQIIPPKDVDVLMIAPKGPGHTVRSQYQEGQGVPCLIAVHQDATGKAHDLGLAYALAIGGARAGVLETTFREETETDLFGEQAVLCGGVTALMKCGFEVLVEAGYEPESAYFECIHEMKLIVDLINESGFAGMRYSISNTAEYGDYITGPKIITEDTKNAMRQVLKDIQEGVFARNWLLENQVGCPNFNAKRRMESEHQLEKVGAELRGLMSWTQKKKLIDN.

Residues 2 to 182 (AKIYYQQDCN…GGARAGVLET (181 aa)) enclose the KARI N-terminal Rossmann domain. Residues 25–28 (YGSQ), S51, S53, and 83–86 (DEKQ) contribute to the NADP(+) site. Residue H108 is part of the active site. An NADP(+)-binding site is contributed by G134. Positions 183-328 (TFREETETDL…AELRGLMSWT (146 aa)) constitute a KARI C-terminal knotted domain. Mg(2+) contacts are provided by D191, E195, E227, and E231. Position 252 (S252) interacts with substrate.

Belongs to the ketol-acid reductoisomerase family. Mg(2+) serves as cofactor.

It carries out the reaction (2R)-2,3-dihydroxy-3-methylbutanoate + NADP(+) = (2S)-2-acetolactate + NADPH + H(+). The catalysed reaction is (2R,3R)-2,3-dihydroxy-3-methylpentanoate + NADP(+) = (S)-2-ethyl-2-hydroxy-3-oxobutanoate + NADPH + H(+). The protein operates within amino-acid biosynthesis; L-isoleucine biosynthesis; L-isoleucine from 2-oxobutanoate: step 2/4. It functions in the pathway amino-acid biosynthesis; L-valine biosynthesis; L-valine from pyruvate: step 2/4. Functionally, involved in the biosynthesis of branched-chain amino acids (BCAA). Catalyzes an alkyl-migration followed by a ketol-acid reduction of (S)-2-acetolactate (S2AL) to yield (R)-2,3-dihydroxy-isovalerate. In the isomerase reaction, S2AL is rearranged via a Mg-dependent methyl migration to produce 3-hydroxy-3-methyl-2-ketobutyrate (HMKB). In the reductase reaction, this 2-ketoacid undergoes a metal-dependent reduction by NADPH to yield (R)-2,3-dihydroxy-isovalerate. The chain is Ketol-acid reductoisomerase (NADP(+)) from Lachnoclostridium phytofermentans (strain ATCC 700394 / DSM 18823 / ISDg) (Clostridium phytofermentans).